The chain runs to 425 residues: MLDIKRIRNNLDEIKAAMARRGEKDFDLDAVVALDEKRRELLQQVELMKNEQNTVSKEVPKLKKEGKDATEVMARMKELSGKIKELDGQVKEVEDQLEYTLLRIPNVPHPDVPQGETDDDNIEVRKWSEPTHFDFEPKAHWDIATDLGIIDFEAASKITGARFALYKGVGARLERALINFMLDLHIEEHGYTEVLPPFMVNRSSMTGTGQLPKFEEDAFKLPQKDYFLVPTAEVPVTNMHRDEIIEGANLPLSYVAYTPCFRSEAGSAGRDTRGLIRQHQFNKVELVKFVKPEDSYAELEKLTNNAEKVLQLLEIPYRIVRICTGDLGFTAAFKYDIEVWMPSYNRYVEISSCSNFEDFQARRANIRYRPEEKGKVEFLHTLNGSGLAVGRTVAAILENCQDDEGNVKIPEALIPYMRGIKVITK.

231–233 (TAE) provides a ligand contact to L-serine. 262-264 (RSE) serves as a coordination point for ATP. Position 285 (Glu-285) interacts with L-serine. 349–352 (EISS) serves as a coordination point for ATP. Ser-385 contributes to the L-serine binding site.

The protein belongs to the class-II aminoacyl-tRNA synthetase family. Type-1 seryl-tRNA synthetase subfamily. In terms of assembly, homodimer. The tRNA molecule binds across the dimer.

Its subcellular location is the cytoplasm. The enzyme catalyses tRNA(Ser) + L-serine + ATP = L-seryl-tRNA(Ser) + AMP + diphosphate + H(+). It catalyses the reaction tRNA(Sec) + L-serine + ATP = L-seryl-tRNA(Sec) + AMP + diphosphate + H(+). It functions in the pathway aminoacyl-tRNA biosynthesis; selenocysteinyl-tRNA(Sec) biosynthesis; L-seryl-tRNA(Sec) from L-serine and tRNA(Sec): step 1/1. In terms of biological role, catalyzes the attachment of serine to tRNA(Ser). Is also able to aminoacylate tRNA(Sec) with serine, to form the misacylated tRNA L-seryl-tRNA(Sec), which will be further converted into selenocysteinyl-tRNA(Sec). The protein is Serine--tRNA ligase of Alkaliphilus oremlandii (strain OhILAs) (Clostridium oremlandii (strain OhILAs)).